A 208-amino-acid polypeptide reads, in one-letter code: Large ribosomal subunit protein bL25 (208 aa).

Low complexity predominate over residues P186–A201. A disordered region spans residues P186–A208.

The protein belongs to the bacterial ribosomal protein bL25 family. CTC subfamily. Part of the 50S ribosomal subunit; part of the 5S rRNA/L5/L18/L25 subcomplex. Contacts the 5S rRNA. Binds to the 5S rRNA independently of L5 and L18.

Functionally, this is one of the proteins that binds to the 5S RNA in the ribosome where it forms part of the central protuberance. The chain is Large ribosomal subunit protein bL25 from Ralstonia pickettii (strain 12J).